The sequence spans 219 residues: METPIEREIRRSCEREESLRRSRGLSPGRAGRELVELRVRPVLNLPGPGPALPRALERARAGAQMQRDIEREAHRQAALARPAVPEPRARSPPQPLGELKRFFEAAAGSGSSAGAGDGAGPQRLPEPGGRPRSAVQGGCRVLGSAPPPFTPSLLEQEVRAVREREQELQRQRRSVYGTAEFKEPTPSLTASRGDGKLVVIWPPRRKVSENGLEQEERKP.

3 stretches are compositionally biased toward basic and acidic residues: residues 1 to 20, 30 to 39, and 156 to 170; these read METP…ESLR, AGRELVELRV, and QEVR…ELQR. Residues 1–195 are disordered; sequence METPIEREIR…PSLTASRGDG (195 aa).

The protein belongs to the MISP family.

This is an uncharacterized protein from Homo sapiens (Human).